The primary structure comprises 632 residues: Biosynthetic arginine decarboxylase (632 aa).

Position 101 is an N6-(pyridoxal phosphate)lysine (Lys-101). Residue 281–291 (FDVGGGLGVDY) participates in substrate binding.

This sequence belongs to the Orn/Lys/Arg decarboxylase class-II family. SpeA subfamily. The cofactor is Mg(2+). It depends on pyridoxal 5'-phosphate as a cofactor.

The enzyme catalyses L-arginine + H(+) = agmatine + CO2. It functions in the pathway amine and polyamine biosynthesis; agmatine biosynthesis; agmatine from L-arginine: step 1/1. Its function is as follows. Catalyzes the biosynthesis of agmatine from arginine. In Salmonella agona (strain SL483), this protein is Biosynthetic arginine decarboxylase.